The chain runs to 138 residues: Acidic phospholipase A2 jerdoxin (138 aa).

A signal peptide spans 1 to 16 (MRTLWIMAVLLVGVEG). 7 cysteine pairs are disulfide-bonded: C42-C131, C44-C60, C59-C111, C65-C138, C66-C104, C73-C97, and C91-C102. Residues Y43, G45, and G47 each coordinate Ca(2+). H63 is a catalytic residue. D64 is a binding site for Ca(2+). D105 is an active-site residue.

The protein belongs to the phospholipase A2 family. Group II subfamily. D49 sub-subfamily. In terms of assembly, monomer. The cofactor is Ca(2+). Expressed by the venom gland.

Its subcellular location is the secreted. It carries out the reaction a 1,2-diacyl-sn-glycero-3-phosphocholine + H2O = a 1-acyl-sn-glycero-3-phosphocholine + a fatty acid + H(+). In terms of biological role, snake venom phospholipase A2 (PLA2) that displays edema-inducing activities, exhibits indirect hemolytic activity, and inhibits ADP-induced platelet aggregation. PLA2 catalyzes the calcium-dependent hydrolysis of the 2-acyl groups in 3-sn-phosphoglycerides. The sequence is that of Acidic phospholipase A2 jerdoxin from Protobothrops jerdonii (Jerdon's pitviper).